A 208-amino-acid chain; its full sequence is Small ribosomal subunit protein uS4 (208 aa).

Residues 98-160 enclose the S4 RNA-binding domain; that stretch reads CRLDNVVYRM…AKKQSRIQLA (63 aa).

Belongs to the universal ribosomal protein uS4 family. Part of the 30S ribosomal subunit. Contacts protein S5. The interaction surface between S4 and S5 is involved in control of translational fidelity.

Its function is as follows. One of the primary rRNA binding proteins, it binds directly to 16S rRNA where it nucleates assembly of the body of the 30S subunit. Functionally, with S5 and S12 plays an important role in translational accuracy. The chain is Small ribosomal subunit protein uS4 from Vesicomyosocius okutanii subsp. Calyptogena okutanii (strain HA).